The primary structure comprises 1429 residues: Protein lin-12 (1429 aa).

A signal peptide spans 1 to 15 (MRIPTICFLFLLISL). The Extracellular segment spans residues 16–908 (SKSLHIGSCL…GNNTGFLSWN (893 aa)). EGF-like domains lie at 20-61 (HIGS…EYCE) and 114-150 (TQGW…ERCE). Disulfide bonds link Cys-24–Cys-35, Cys-29–Cys-49, Cys-51–Cys-60, Cys-118–Cys-129, Cys-123–Cys-138, Cys-140–Cys-149, Cys-156–Cys-169, Cys-163–Cys-178, and Cys-180–Cys-189. Asn-41 is a glycosylation site (N-linked (GlcNAc...) asparagine). The EGF-like 3; calcium-binding domain maps to 152-190 (DVNECEENKNACGNRSTCMNTLGTYICVCPQGFLPPDCL). N-linked (GlcNAc...) asparagine glycosylation is present at Asn-165. Residue Asn-194 is glycosylated (N-linked (GlcNAc...) asparagine). EGF-like domains follow at residues 201-246 (KQPV…STCE), 250-285 (KEDS…SYCQ), 287-323 (GKDN…PYCE), and 323-363 (EKMD…ILCE). 30 disulfides stabilise this stretch: Cys-205–Cys-227, Cys-221–Cys-234, Cys-236–Cys-245, Cys-254–Cys-264, Cys-259–Cys-273, Cys-275–Cys-284, Cys-291–Cys-302, Cys-296–Cys-311, Cys-313–Cys-322, Cys-327–Cys-339, Cys-334–Cys-351, Cys-353–Cys-362, Cys-369–Cys-381, Cys-375–Cys-390, Cys-392–Cys-401, Cys-408–Cys-419, Cys-413–Cys-429, Cys-431–Cys-440, Cys-462–Cys-475, Cys-469–Cys-480, Cys-482–Cys-491, Cys-507–Cys-518, Cys-512–Cys-529, Cys-531–Cys-540, Cys-547–Cys-558, Cys-552–Cys-567, Cys-569–Cys-578, Cys-586–Cys-597, Cys-591–Cys-607, and Cys-609–Cys-618. One can recognise an EGF-like 8; calcium-binding domain in the interval 365–402 (DKNECLSENMCLNNGTCVNLPGSFRCDCARGFGGKWCD). N-linked (GlcNAc...) asparagine glycosylation occurs at Asn-378. EGF-like domains are found at residues 404-441 (PLNM…KRCE), 449-492 (GGVR…NQCE), 503-541 (SENL…DICE), 543-579 (HKDL…NGCE), and 582-619 (KMFR…ARCE). A glycan (N-linked (GlcNAc...) asparagine) is linked at Asn-515. Asn-623 carries an N-linked (GlcNAc...) asparagine glycan. Disulfide bonds link Cys-638–Cys-661, Cys-643–Cys-656, Cys-652–Cys-668, Cys-678–Cys-702, Cys-684–Cys-697, Cys-693–Cys-709, Cys-716–Cys-742, Cys-724–Cys-737, and Cys-733–Cys-749. LNR repeat units follow at residues 638–674 (CEKR…KREP), 678–709 (CRYG…GMDC), and 716–754 (CPVK…NETN). Residues Asn-751, Asn-754, and Asn-900 are each glycosylated (N-linked (GlcNAc...) asparagine). A helical membrane pass occupies residues 909–931 (ALLLIGAGCLIVMVVLMLGALPG). The Cytoplasmic portion of the chain corresponds to 932–1429 (NRTRKRRMIN…TRYSEPAHYF (498 aa)). The interval 933-952 (RTRKRRMINASVWMPPMENE) is RAM domain. ANK repeat units follow at residues 1093–1122 (DENT…DPTI), 1126–1158 (SERS…DIEE), 1162–1194 (NGMT…KVDY), 1206–1236 (KGRT…NKDK), and 1240–1269 (DGKT…SVEA). The segment at 1308-1374 (IQHTHQPQPS…TTHTTPTSLN (67 aa)) is disordered. A compositionally biased stretch (basic residues) spans 1319–1330 (KVTRAPKKQTSR). Over residues 1361-1374 (HFMNTTHTTPTSLN) the composition is skewed to polar residues.

This sequence belongs to the NOTCH family. In terms of assembly, may interact with dsl-1. May interact with lag-2. May interact with osm-11. Interacts with sel-10. When activated, the lin-12/Notch intracellular domain (NICD) can become a component of a complex consisting of at least the NICD, lag-1 and sel-8/lag-3. The NICD probably facilitates ordered assembly of the ternary complex via allosteric interactions of its RBP-j associated molecule (RAM) domain with lag-1. In terms of processing, upon binding its ligands, it is cleaved (S2 cleavage) in its extracellular domain, close to the transmembrane domain. S2 cleavage is probably mediated by the metalloproteases adm-4 and sup-17. It is then cleaved (S3 cleavage) downstream of its transmembrane domain, releasing it from the cell membrane; S3 cleavage requires a multiprotein gamma-secretase complex, which may include presenilin sel-12.

Its subcellular location is the apical cell membrane. The protein resides in the nucleus. Essential signaling protein which has a major role in many developmental processes; involved in cell fate decisions that require cell-cell interactions. Probable membrane-bound receptor for putative ligands lag-2, apx-1, dsl-1 and osm-11. Upon ligand activation, and releasing from the cell membrane, the lin-12/Notch intracellular domain (NICD) forms a transcriptional activator complex with lag-1 and lag-3 and regulates expression of various genes. Required for ventral cell fates in the postembryonic mesodermal lineage (M lineage) and in uterine precursor cells. Activity in cell fate decisions and tumorigenesis is negatively regulated by sel-10. Best known for involvement in cell-fate decisions during development, but also plays roles in other events. Regulates recovery from the dauer larval state. Modulates chemosensory avoidance of octanol and quiescence during molting. Promotes basement membrane mobility during tissue remodeling. Involved in establishing left-right asymmetry during intestinal organogenesis. This is Protein lin-12 from Caenorhabditis elegans.